Here is a 429-residue protein sequence, read N- to C-terminus: Histidinol dehydrogenase (429 aa).

The NAD(+) site is built by Tyr127, Gln188, and Asn211. Positions 234, 256, and 259 each coordinate substrate. 2 residues coordinate Zn(2+): Gln256 and His259. Catalysis depends on proton acceptor residues Glu324 and His325. Residues His325, Asp358, Glu412, and His417 each contribute to the substrate site. Asp358 contributes to the Zn(2+) binding site. His417 is a Zn(2+) binding site.

This sequence belongs to the histidinol dehydrogenase family. Requires Zn(2+) as cofactor.

It catalyses the reaction L-histidinol + 2 NAD(+) + H2O = L-histidine + 2 NADH + 3 H(+). It functions in the pathway amino-acid biosynthesis; L-histidine biosynthesis; L-histidine from 5-phospho-alpha-D-ribose 1-diphosphate: step 9/9. Catalyzes the sequential NAD-dependent oxidations of L-histidinol to L-histidinaldehyde and then to L-histidine. This chain is Histidinol dehydrogenase, found in Bacillus cereus (strain ATCC 10987 / NRS 248).